Consider the following 512-residue polypeptide: 2-isopropylmalate synthase (512 aa).

The Pyruvate carboxyltransferase domain maps to 5-268 (LIIFDTTLRD…DVGIDTQHIV (264 aa)). Asp14, His202, His204, and Asn239 together coordinate Mn(2+). Residues 394–512 (GFVSLAQHSE…SKAERVAAQG (119 aa)) form a regulatory domain region.

Belongs to the alpha-IPM synthase/homocitrate synthase family. LeuA type 1 subfamily. Homodimer. The cofactor is Mn(2+).

It is found in the cytoplasm. The enzyme catalyses 3-methyl-2-oxobutanoate + acetyl-CoA + H2O = (2S)-2-isopropylmalate + CoA + H(+). The protein operates within amino-acid biosynthesis; L-leucine biosynthesis; L-leucine from 3-methyl-2-oxobutanoate: step 1/4. Its function is as follows. Catalyzes the condensation of the acetyl group of acetyl-CoA with 3-methyl-2-oxobutanoate (2-ketoisovalerate) to form 3-carboxy-3-hydroxy-4-methylpentanoate (2-isopropylmalate). The sequence is that of 2-isopropylmalate synthase from Acidovorax ebreus (strain TPSY) (Diaphorobacter sp. (strain TPSY)).